A 119-amino-acid polypeptide reads, in one-letter code: Ribonuclease P protein component (119 aa).

It belongs to the RnpA family. Consists of a catalytic RNA component (M1 or rnpB) and a protein subunit.

The catalysed reaction is Endonucleolytic cleavage of RNA, removing 5'-extranucleotides from tRNA precursor.. Functionally, RNaseP catalyzes the removal of the 5'-leader sequence from pre-tRNA to produce the mature 5'-terminus. It can also cleave other RNA substrates such as 4.5S RNA. The protein component plays an auxiliary but essential role in vivo by binding to the 5'-leader sequence and broadening the substrate specificity of the ribozyme. The chain is Ribonuclease P protein component from Pasteurella multocida (strain Pm70).